The chain runs to 62 residues: Snaclec aspercetin subunit alpha (62 aa).

C2 and C13 are oxidised to a cystine. The C-type lectin domain maps to 9 to 62; sequence YEGHCYRFFHPPKDWADAERFCTEQAKGGALVSIQRFGEEDFVSNLITKNLQRG.

This sequence belongs to the snaclec family. Heterodimer; disulfide-linked. As to expression, expressed by the venom gland.

It localises to the secreted. Functionally, snaclec that binds to von Willebrand factor (VWF) and induces its interaction with GPIbalpha (GP1BA) (via the vWF A1 domain), resulting in platelet aggregation. Intravenous injection in mice induces a dose-dependent drop in platelet count (thrombocytopenia). Pretreatment by intravenous injection by this protein in mice potentiates the hemorrhagic lesion in the skin provoked by the metalloproteinase BaP1 intradermally injected. This result is not observed when both BaP1 and this protein are injected simultaneously. This Bothrops asper (Terciopelo) protein is Snaclec aspercetin subunit alpha.